The primary structure comprises 384 residues: ATP phosphoribosyltransferase regulatory subunit (384 aa).

It belongs to the class-II aminoacyl-tRNA synthetase family. HisZ subfamily. Heteromultimer composed of HisG and HisZ subunits.

The protein localises to the cytoplasm. It participates in amino-acid biosynthesis; L-histidine biosynthesis; L-histidine from 5-phospho-alpha-D-ribose 1-diphosphate: step 1/9. Its function is as follows. Required for the first step of histidine biosynthesis. May allow the feedback regulation of ATP phosphoribosyltransferase activity by histidine. This Azoarcus sp. (strain BH72) protein is ATP phosphoribosyltransferase regulatory subunit.